The sequence spans 267 residues: Potassium channel regulatory protein (267 aa).

Residues 5–74 (ELVTLNVGGK…LRTQQLLLPT (70 aa)) form the BTB domain.

In terms of assembly, can form homooligomers. Interacts with KCNA1 (via cytoplasmic N-terminal domain) and KCNA4.

The protein resides in the endoplasmic reticulum. Functionally, inhibits potassium fluxes in cells. May regulate Kv1 family channel proteins by retaining a fraction of channels in endomembranes. This is Potassium channel regulatory protein (KCNRG) from Bos taurus (Bovine).